The primary structure comprises 889 residues: DNA gyrase subunit A (889 aa).

A Topo IIA-type catalytic domain is found at 35–501 (LPDVRDGLKP…GFEDLEDEDL (467 aa)). Catalysis depends on Tyr123, which acts as the O-(5'-phospho-DNA)-tyrosine intermediate. The GyrA-box signature appears at 528–534 (QNRGGRG). The disordered stretch occupies residues 811 to 889 (KEDAEDETNE…IQQSLDEDEE (79 aa)). The segment covering 813-823 (DAEDETNEDEQ) has biased composition (acidic residues). Over residues 863–875 (DGRIEVRQDFMDR) the composition is skewed to basic and acidic residues. The segment covering 876 to 889 (VEEDIQQSLDEDEE) has biased composition (acidic residues).

It belongs to the type II topoisomerase GyrA/ParC subunit family. Heterotetramer, composed of two GyrA and two GyrB chains. In the heterotetramer, GyrA contains the active site tyrosine that forms a transient covalent intermediate with DNA, while GyrB binds cofactors and catalyzes ATP hydrolysis.

The protein resides in the cytoplasm. It carries out the reaction ATP-dependent breakage, passage and rejoining of double-stranded DNA.. In terms of biological role, a type II topoisomerase that negatively supercoils closed circular double-stranded (ds) DNA in an ATP-dependent manner to modulate DNA topology and maintain chromosomes in an underwound state. Negative supercoiling favors strand separation, and DNA replication, transcription, recombination and repair, all of which involve strand separation. Also able to catalyze the interconversion of other topological isomers of dsDNA rings, including catenanes and knotted rings. Type II topoisomerases break and join 2 DNA strands simultaneously in an ATP-dependent manner. This chain is DNA gyrase subunit A, found in Staphylococcus aureus.